Here is a 329-residue protein sequence, read N- to C-terminus: Sialic acid-binding periplasmic protein SiaP (329 aa).

The first 23 residues, 1–23 (MMKLTKLFLATAISLGVSSAVLA), serve as a signal peptide directing secretion. 6 residues coordinate N-acetyl-beta-neuraminate: Asn33, Asp72, Glu90, Arg150, Arg170, and Asn210.

Belongs to the bacterial solute-binding protein 7 family. In terms of assembly, the complex comprises the extracytoplasmic solute receptor protein SiaP, and the fused transmembrane protein SiaT.

It localises to the periplasm. Its function is as follows. Part of the tripartite ATP-independent periplasmic (TRAP) transport system SiaPT involved in the uptake of sialic acid (N-acetyl-beta-neuraminate). This protein specifically binds sialic acid with high affinity. N-Acetylneuraminate (sialic acid) can then be incorporated into the lipooligosaccharides (LOS) as a terminal non-reducing sugar, protecting the bacterium from complement-mediated killing by normal human serum. This is Sialic acid-binding periplasmic protein SiaP (siaP) from Haemophilus influenzae (strain ATCC 51907 / DSM 11121 / KW20 / Rd).